Here is a 482-residue protein sequence, read N- to C-terminus: Putative metallophosphoesterase F40B5.2 (482 aa).

4 helical membrane-spanning segments follow: residues 15 to 35 (MNLKLKIAIIVIGFIHVSIAI), 129 to 149 (ALMMLFLFLSHIAMFFYYIFL), 156 to 176 (IAITSLSFIAAYAHILIFLLI), and 205 to 225 (CYHILLALILGFIFMFAGLYT). Residues aspartate 256, histidine 258, aspartate 288, asparagine 319, histidine 421, and histidine 423 each contribute to the a divalent metal cation site.

This sequence belongs to the metallophosphoesterase superfamily. LOC643853 family.

The protein resides in the membrane. This is Putative metallophosphoesterase F40B5.2 from Caenorhabditis elegans.